The chain runs to 1527 residues: uncharacterized protein (1527 aa).

Coiled coils occupy residues 262 to 293 (NVEISRDKIKKLKDKNEIFNQLINEFGENINE), 699 to 751 (QQQQ…SEKL), 905 to 932 (NNLNIINNNQENNNNNNNDLKETIENQI), and 1217 to 1255 (KIISSELELEQQQQQQQQQQQQQQQQQQQQQQQQQQKSS). The tract at residues 683–734 (TNQEQEQDQQDQPPPPQQQQEQQQEQQQQQEQQQQQDQQQQDQQQDQQEKQQ) is disordered. Residues 700-728 (QQQEQQQEQQQQQEQQQQQDQQQQDQQQD) show a composition bias toward low complexity.

This is an uncharacterized protein from Dictyostelium discoideum (Social amoeba).